A 1017-amino-acid polypeptide reads, in one-letter code: Probable isoleucine--tRNA ligase, cytoplasmic (1017 aa).

Positions 45 to 55 (PFATGLPHYGH) match the 'HIGH' region motif. The 'KMSKS' region motif lies at 609-613 (KMSKR). Lysine 612 serves as a coordination point for ATP.

Belongs to the class-I aminoacyl-tRNA synthetase family.

It localises to the cytoplasm. It catalyses the reaction tRNA(Ile) + L-isoleucine + ATP = L-isoleucyl-tRNA(Ile) + AMP + diphosphate. This is Probable isoleucine--tRNA ligase, cytoplasmic from Encephalitozoon cuniculi (strain GB-M1) (Microsporidian parasite).